We begin with the raw amino-acid sequence, 139 residues long: uncharacterized protein (139 aa).

Positions 1 to 116 (MYNPWQVGAS…TRPRVVARGK (116 aa)) are disordered. Low complexity-rich tracts occupy residues 50–70 (RPRP…GPRP) and 84–110 (LPAY…TRPR).

This is an uncharacterized protein from Homo sapiens (Human).